Reading from the N-terminus, the 1251-residue chain is ATP-dependent helicase/nuclease subunit A (1251 aa).

The 477-residue stretch at 5–481 folds into the UvrD-like helicase ATP-binding domain; the sequence is TKWTDEQWEA…IILSRNFRSR (477 aa). Residue 26-33 participates in ATP binding; the sequence is AAAGAGKT. The region spanning 526–824 is the UvrD-like helicase C-terminal domain; it reads TVGGEVEFHL…RIMSIHKSKG (299 aa). Positions 544–565 are disordered; sequence NFTFENEGEEGRQADEGEEDEE.

The protein belongs to the helicase family. AddA subfamily. In terms of assembly, heterodimer of AddA and AddB/RexB. Mg(2+) is required as a cofactor.

It carries out the reaction Couples ATP hydrolysis with the unwinding of duplex DNA by translocating in the 3'-5' direction.. The enzyme catalyses ATP + H2O = ADP + phosphate + H(+). Functionally, the heterodimer acts as both an ATP-dependent DNA helicase and an ATP-dependent, dual-direction single-stranded exonuclease. Recognizes the chi site generating a DNA molecule suitable for the initiation of homologous recombination. The AddA nuclease domain is required for chi fragment generation; this subunit has the helicase and 3' -&gt; 5' nuclease activities. This is ATP-dependent helicase/nuclease subunit A from Acetivibrio thermocellus (strain ATCC 27405 / DSM 1237 / JCM 9322 / NBRC 103400 / NCIMB 10682 / NRRL B-4536 / VPI 7372) (Clostridium thermocellum).